Consider the following 97-residue polypeptide: Large ribosomal subunit protein uL23 (97 aa).

It belongs to the universal ribosomal protein uL23 family. In terms of assembly, part of the 50S ribosomal subunit. Contacts protein L29, and trigger factor when it is bound to the ribosome.

Its function is as follows. One of the early assembly proteins it binds 23S rRNA. One of the proteins that surrounds the polypeptide exit tunnel on the outside of the ribosome. Forms the main docking site for trigger factor binding to the ribosome. This Marinobacter nauticus (strain ATCC 700491 / DSM 11845 / VT8) (Marinobacter aquaeolei) protein is Large ribosomal subunit protein uL23.